Here is a 464-residue protein sequence, read N- to C-terminus: UDP-glycosyltransferase 83A1 (464 aa).

UDP-alpha-D-glucose contacts are provided by residues Ser-295, 341–343, 358–366, and 380–383; these read APQ, HCGWNSTLE, and FADQ.

The protein belongs to the UDP-glycosyltransferase family.

This is UDP-glycosyltransferase 83A1 (UGT83A1) from Arabidopsis thaliana (Mouse-ear cress).